Consider the following 126-residue polypeptide: Large ribosomal subunit protein bL12 (126 aa).

The disordered stretch occupies residues 97–126 (PQPVKSGVSKEEAEEAKKQLAESGAEVEVK). The span at 104-116 (VSKEEAEEAKKQL) shows a compositional bias: basic and acidic residues.

The protein belongs to the bacterial ribosomal protein bL12 family. In terms of assembly, homodimer. Part of the ribosomal stalk of the 50S ribosomal subunit. Forms a multimeric L10(L12)X complex, where L10 forms an elongated spine to which 2 to 4 L12 dimers bind in a sequential fashion. Binds GTP-bound translation factors.

Its function is as follows. Forms part of the ribosomal stalk which helps the ribosome interact with GTP-bound translation factors. Is thus essential for accurate translation. This is Large ribosomal subunit protein bL12 from Geotalea uraniireducens (strain Rf4) (Geobacter uraniireducens).